Reading from the N-terminus, the 150-residue chain is MQVLTKRYPKNCLLKVMDRYSAVVRNMEQVVMIPSLLRDVELSGSGGSVQDGAPDLYTYFTMLKSICVEVDHGLLPREEWQAKVAGNEGSEAENEAAETEEAEEDRLSEELDLEAQFHLHFSSLHHILTHLTQKAQEVTQKYQEMTGQVL.

Positions 83–105 are disordered; it reads KVAGNEGSEAENEAAETEEAEED. Serine 90 is modified (phosphoserine). Residues 90 to 105 show a composition bias toward acidic residues; it reads SEAENEAAETEEAEED.

The protein belongs to the SPOT14 family. Homodimer. Heterodimer with MID1IP1. Interacts with THRB and PLAGL1. As to expression, highly expressed in liver, lactating mammary gland, epididymal, retroperitoneal and brown fat. Mainly expressed in tissues that synthesize triglycerides.

It localises to the nucleus. The protein localises to the cytoplasm. Plays a role in the regulation of lipogenesis, especially in lactating mammary gland. Important for the biosynthesis of triglycerides with medium-length fatty acid chains. May modulate lipogenesis by interacting with MID1IP1 and preventing its interaction with ACACA. May function as transcriptional coactivator. May modulate the transcription factor activity of THRB. The sequence is that of Thyroid hormone-inducible hepatic protein (Thrsp) from Rattus norvegicus (Rat).